The primary structure comprises 217 residues: 3,4-dihydroxy-2-butanone 4-phosphate synthase (217 aa).

D-ribulose 5-phosphate contacts are provided by residues 40 to 41 (RE), Asp45, 153 to 157 (RRGHT), and Glu177. Glu41 serves as a coordination point for Mg(2+). His156 is a Mg(2+) binding site.

It belongs to the DHBP synthase family. In terms of assembly, homodimer. The cofactor is Mg(2+). Mn(2+) is required as a cofactor.

The enzyme catalyses D-ribulose 5-phosphate = (2S)-2-hydroxy-3-oxobutyl phosphate + formate + H(+). It functions in the pathway cofactor biosynthesis; riboflavin biosynthesis; 2-hydroxy-3-oxobutyl phosphate from D-ribulose 5-phosphate: step 1/1. Functionally, catalyzes the conversion of D-ribulose 5-phosphate to formate and 3,4-dihydroxy-2-butanone 4-phosphate. The chain is 3,4-dihydroxy-2-butanone 4-phosphate synthase from Aliivibrio fischeri (Vibrio fischeri).